A 370-amino-acid polypeptide reads, in one-letter code: 4-hydroxy-3-methylbut-2-en-1-yl diphosphate synthase (flavodoxin) (370 aa).

The [4Fe-4S] cluster site is built by Cys-268, Cys-271, Cys-303, and Glu-310.

It belongs to the IspG family. The cofactor is [4Fe-4S] cluster.

The enzyme catalyses (2E)-4-hydroxy-3-methylbut-2-enyl diphosphate + oxidized [flavodoxin] + H2O + 2 H(+) = 2-C-methyl-D-erythritol 2,4-cyclic diphosphate + reduced [flavodoxin]. It functions in the pathway isoprenoid biosynthesis; isopentenyl diphosphate biosynthesis via DXP pathway; isopentenyl diphosphate from 1-deoxy-D-xylulose 5-phosphate: step 5/6. Its function is as follows. Converts 2C-methyl-D-erythritol 2,4-cyclodiphosphate (ME-2,4cPP) into 1-hydroxy-2-methyl-2-(E)-butenyl 4-diphosphate. The polypeptide is 4-hydroxy-3-methylbut-2-en-1-yl diphosphate synthase (flavodoxin) (Bacillus cereus (strain B4264)).